A 236-amino-acid chain; its full sequence is Glucosamine-6-phosphate deaminase (236 aa).

The active-site Proton acceptor; for enolization step is the D62. N128 functions as the For ring-opening step in the catalytic mechanism. H130 acts as the Proton acceptor; for ring-opening step in catalysis. The active-site For ring-opening step is E135.

Belongs to the glucosamine/galactosamine-6-phosphate isomerase family. NagB subfamily.

It catalyses the reaction alpha-D-glucosamine 6-phosphate + H2O = beta-D-fructose 6-phosphate + NH4(+). It functions in the pathway amino-sugar metabolism; N-acetylneuraminate degradation; D-fructose 6-phosphate from N-acetylneuraminate: step 5/5. Its function is as follows. Catalyzes the reversible isomerization-deamination of glucosamine 6-phosphate (GlcN6P) to form fructose 6-phosphate (Fru6P) and ammonium ion. This Lacticaseibacillus paracasei (strain ATCC 334 / BCRC 17002 / CCUG 31169 / CIP 107868 / KCTC 3260 / NRRL B-441) (Lactobacillus paracasei) protein is Glucosamine-6-phosphate deaminase.